The following is a 174-amino-acid chain: MKDLTMLLDELKDMSFFNKGDICLIGCSTSEVIGEKIGTVGSMEVAETIFNALDVVSKETGVTFAFQGCEHINRAITIEKSQYNPLTMEEVSVVPDVHAGGSLATYAFQHMKDPIVVEHITVPCGIDIGQTLIGMHIKHVCVPVRTSVKQVGQAIVTIATSRPKKIGGERAKYK.

This sequence belongs to the UPF0340 family.

The polypeptide is UPF0340 protein SAHV_2098 (Staphylococcus aureus (strain Mu3 / ATCC 700698)).